A 336-amino-acid polypeptide reads, in one-letter code: Holliday junction branch migration complex subunit RuvB (336 aa).

The tract at residues 4 to 184 (SDRLISSQSI…FGIVQRLEYY (181 aa)) is large ATPase domain (RuvB-L). Residues I23, R24, G65, K68, T69, T70, 131–133 (EDY), R174, Y184, and R221 each bind ATP. T69 is a binding site for Mg(2+). Residues 185–255 (SVDSLTQIVA…MAQQALEMLE (71 aa)) are small ATPAse domain (RuvB-S). Residues 258–336 (QHGFDLMDRK…HFGFSAIEQE (79 aa)) form a head domain (RuvB-H) region. DNA contacts are provided by R313 and R318.

It belongs to the RuvB family. In terms of assembly, homohexamer. Forms an RuvA(8)-RuvB(12)-Holliday junction (HJ) complex. HJ DNA is sandwiched between 2 RuvA tetramers; dsDNA enters through RuvA and exits via RuvB. An RuvB hexamer assembles on each DNA strand where it exits the tetramer. Each RuvB hexamer is contacted by two RuvA subunits (via domain III) on 2 adjacent RuvB subunits; this complex drives branch migration. In the full resolvosome a probable DNA-RuvA(4)-RuvB(12)-RuvC(2) complex forms which resolves the HJ.

It is found in the cytoplasm. It carries out the reaction ATP + H2O = ADP + phosphate + H(+). Its function is as follows. The RuvA-RuvB-RuvC complex processes Holliday junction (HJ) DNA during genetic recombination and DNA repair, while the RuvA-RuvB complex plays an important role in the rescue of blocked DNA replication forks via replication fork reversal (RFR). RuvA specifically binds to HJ cruciform DNA, conferring on it an open structure. The RuvB hexamer acts as an ATP-dependent pump, pulling dsDNA into and through the RuvAB complex. RuvB forms 2 homohexamers on either side of HJ DNA bound by 1 or 2 RuvA tetramers; 4 subunits per hexamer contact DNA at a time. Coordinated motions by a converter formed by DNA-disengaged RuvB subunits stimulates ATP hydrolysis and nucleotide exchange. Immobilization of the converter enables RuvB to convert the ATP-contained energy into a lever motion, pulling 2 nucleotides of DNA out of the RuvA tetramer per ATP hydrolyzed, thus driving DNA branch migration. The RuvB motors rotate together with the DNA substrate, which together with the progressing nucleotide cycle form the mechanistic basis for DNA recombination by continuous HJ branch migration. Branch migration allows RuvC to scan DNA until it finds its consensus sequence, where it cleaves and resolves cruciform DNA. The polypeptide is Holliday junction branch migration complex subunit RuvB (Legionella pneumophila (strain Lens)).